We begin with the raw amino-acid sequence, 264 residues long: Thiazole synthase (264 aa).

The active-site Schiff-base intermediate with DXP is Lys106. Residues Gly167, 193–194 (AG), and 215–216 (NS) contribute to the 1-deoxy-D-xylulose 5-phosphate site.

This sequence belongs to the ThiG family. As to quaternary structure, homotetramer. Forms heterodimers with either ThiH or ThiS.

It is found in the cytoplasm. It catalyses the reaction [ThiS sulfur-carrier protein]-C-terminal-Gly-aminoethanethioate + 2-iminoacetate + 1-deoxy-D-xylulose 5-phosphate = [ThiS sulfur-carrier protein]-C-terminal Gly-Gly + 2-[(2R,5Z)-2-carboxy-4-methylthiazol-5(2H)-ylidene]ethyl phosphate + 2 H2O + H(+). The protein operates within cofactor biosynthesis; thiamine diphosphate biosynthesis. Its function is as follows. Catalyzes the rearrangement of 1-deoxy-D-xylulose 5-phosphate (DXP) to produce the thiazole phosphate moiety of thiamine. Sulfur is provided by the thiocarboxylate moiety of the carrier protein ThiS. In vitro, sulfur can be provided by H(2)S. In Prochlorococcus marinus (strain MIT 9312), this protein is Thiazole synthase.